The chain runs to 127 residues: 3-aminoacrylate deaminase RutC (127 aa).

Belongs to the RutC family.

The enzyme catalyses (Z)-3-aminoacrylate + H2O + H(+) = 3-oxopropanoate + NH4(+). Functionally, involved in pyrimidine catabolism. Catalyzes the deamination of 3-aminoacrylate to malonic semialdehyde, a reaction that can also occur spontaneously. RutC may facilitate the reaction and modulate the metabolic fitness, rather than catalyzing essential functions. This Pseudomonas syringae pv. syringae (strain B728a) protein is 3-aminoacrylate deaminase RutC.